The chain runs to 730 residues: Regulatory factor X 4 (730 aa).

A compositionally biased stretch (polar residues) spans 30–41 (YSSHTSLGNISN). The segment at 30–59 (YSSHTSLGNISNDETDEEKENRASKPHSTP) is disordered. Residues 61 to 136 (TLQWLGENYE…YHYYGIAVKE (76 aa)) constitute a DNA-binding region (RFX-type winged-helix). Positions 500–532 (EPAISTPSPVPFSPAASSSSVEIPSATSPVSNQ) are disordered. Residues 512 to 528 (SPAASSSSVEIPSATSP) show a composition bias toward low complexity.

This sequence belongs to the RFX family.

It localises to the nucleus. Functionally, required for neural tube ciliogenesis during embryogenesis. The sequence is that of Regulatory factor X 4 from Xenopus laevis (African clawed frog).